The sequence spans 1816 residues: Kinesin-like protein KIF1B (1816 aa).

S2 carries the N-acetylserine modification. A Kinesin motor domain is found at 5–354 (SVKVAVRVRP…LRYADRAKQI (350 aa)). 97–104 (GQTGAGKS) contacts ATP. The tract at residues 270–350 (NINKSLTTLG…TLSTLRYADR (81 aa)) is interaction with KIFBP. Residues 365–386 (NAKLVRELKEEVTRLKDLLRAQ) are a coiled coil. Residues 431-450 (FSTASMGSLTSSPSSCSLSS) are disordered. The span at 432 to 450 (STASMGSLTSSPSSCSLSS) shows a compositional bias: low complexity. The stretch at 470-502 (GEEAIERLKESEKIIAELNETWEEKLRKTEAIR) forms a coiled coil. The 57-residue stretch at 556–612 (TRVGQADAERRQDIVLSGAHIKEEHCIFRSERSNSGEVIVTLEPCERSETYVNGKRV) folds into the FHA domain. Residues T647 and T652 each carry the phosphothreonine modification. Phosphoserine is present on residues Q663 and E665. 2 coiled-coil regions span residues 668 to 737 (EKQG…EEEV) and 841 to 869 (SLEK…AQDE). 2 positions are modified to phosphoserine: S1054 and S1057. T1075 is subject to Phosphothreonine. Residues N1141, S1416, S1454, and S1487 each carry the phosphoserine modification. Residues 1550-1570 (STTTFESAITPSESSGYDSGD) are disordered. A compositionally biased stretch (polar residues) spans 1554–1566 (FESAITPSESSGY). A phosphoserine mark is found at S1573, S1603, S1610, and S1613. Positions 1617 to 1660 (RDPSESSFSSATLTPSSTCPSLVDSRSNSLDQKTPEANSRASSP) are disordered. Residues 1621–1634 (ESSFSSATLTPSST) show a composition bias toward low complexity. A compositionally biased stretch (polar residues) spans 1640-1658 (DSRSNSLDQKTPEANSRAS). Residues 1702–1799 (VSKKGYLHFK…WLYAFNPLLA (98 aa)) form the PH domain.

The protein belongs to the TRAFAC class myosin-kinesin ATPase superfamily. Kinesin family. Unc-104 subfamily. As to quaternary structure, monomer. Interacts with KIFBP; positively regulates KIF1B microtubule motor activity. Interacts (via C-terminus end of the kinesin-motor domain) with CHP1; the interaction occurs in a calcium-dependent manner. In terms of assembly, interacts with MADD (via death domain); links this isoform to Rab3-carrying vesicles in anterograde synaptic vesicle transport. Isoform 3 is abundant in the skeletal muscle. It is also expressed in fetal brain, lung and kidney, and adult heart, placenta, testis, ovary and small intestine. Isoform 2 is abundant in the brain and also expressed in fetal heart, lung, liver and kidney, and adult skeletal muscle, placenta, liver, kidney, heart, spleen, thymus, prostate, testis, ovary, small intestine, colon and pancreas.

It localises to the cytoplasm. The protein localises to the cytoskeleton. It is found in the cytoplasmic vesicle. The protein resides in the secretory vesicle. Its subcellular location is the synaptic vesicle membrane. It localises to the mitochondrion. The enzyme catalyses ATP + H2O + a kinesin associated with a microtubule at position (n) = ADP + phosphate a kinesin associated with a microtubule at position (n+1, toward the plus end).. In terms of biological role, has a plus-end-directed microtubule motor activity and functions as a motor for transport of vesicles and organelles along microtubules. Its function is as follows. Has a plus-end-directed microtubule motor activity and functions as a motor for anterograde synaptic vesicle transport along axonal microtubules from the cell body to the presynapse in neuronal cells. Functions as a downstream effector in a developmental apoptotic pathway that is activated when nerve growth factor (NGF) becomes limiting for neuronal progenitor cells. Has a plus-end-directed microtubule motor activity and functions as a motor for anterograde transport of mitochondria. This Homo sapiens (Human) protein is Kinesin-like protein KIF1B.